The following is a 503-amino-acid chain: Cobyric acid synthase (503 aa).

Positions 251–450 constitute a GATase cobBQ-type domain; that stretch reads DLDIAVIRLP…IHGIFENAAF (200 aa). The Nucleophile role is filled by Cys-331. Residue His-442 is part of the active site.

It belongs to the CobB/CobQ family. CobQ subfamily.

It functions in the pathway cofactor biosynthesis; adenosylcobalamin biosynthesis. Catalyzes amidations at positions B, D, E, and G on adenosylcobyrinic A,C-diamide. NH(2) groups are provided by glutamine, and one molecule of ATP is hydrogenolyzed for each amidation. The chain is Cobyric acid synthase from Dehalococcoides mccartyi (strain ATCC BAA-2100 / JCM 16839 / KCTC 5957 / BAV1).